The following is a 348-amino-acid chain: Dihydroorotase (348 aa).

Residues His-17 and His-19 each coordinate Zn(2+). Substrate contacts are provided by residues 19–21 (HLR) and Asn-45. Lys-103, His-140, and His-178 together coordinate Zn(2+). Position 103 is an N6-carboxylysine (Lys-103). His-140 provides a ligand contact to substrate. Position 223 (Leu-223) interacts with substrate. Residue Asp-251 coordinates Zn(2+). The active site involves Asp-251. Substrate contacts are provided by His-255 and Ala-267.

Belongs to the metallo-dependent hydrolases superfamily. DHOase family. Class II DHOase subfamily. In terms of assembly, homodimer. Zn(2+) serves as cofactor.

It carries out the reaction (S)-dihydroorotate + H2O = N-carbamoyl-L-aspartate + H(+). The protein operates within pyrimidine metabolism; UMP biosynthesis via de novo pathway; (S)-dihydroorotate from bicarbonate: step 3/3. Its function is as follows. Catalyzes the reversible cyclization of carbamoyl aspartate to dihydroorotate. The polypeptide is Dihydroorotase (Shigella boydii serotype 4 (strain Sb227)).